Consider the following 234-residue polypeptide: DNA repair and recombination protein RadB (234 aa).

Belongs to the eukaryotic RecA-like protein family. RadB subfamily.

In terms of biological role, involved in DNA repair and in homologous recombination. May regulate the cleavage reactions of the branch-structured DNA. Has a very weak ATPase activity that is not stimulated by DNA. Binds DNA but does not promote DNA strands exchange. The polypeptide is DNA repair and recombination protein RadB (Methanobrevibacter smithii (strain ATCC 35061 / DSM 861 / OCM 144 / PS)).